A 138-amino-acid polypeptide reads, in one-letter code: Flagellar assembly factor FliW (138 aa).

Belongs to the FliW family. Interacts with translational regulator CsrA and flagellin(s).

It localises to the cytoplasm. Acts as an anti-CsrA protein, binds CsrA and prevents it from repressing translation of its target genes, one of which is flagellin. Binds to flagellin and participates in the assembly of the flagellum. The protein is Flagellar assembly factor FliW of Symbiobacterium thermophilum (strain DSM 24528 / JCM 14929 / IAM 14863 / T).